The following is a 1085-amino-acid chain: Phosphorylase b kinase regulatory subunit beta (1085 aa).

Serine 10, serine 19, and serine 693 each carry phosphoserine. Calmodulin-binding regions lie at residues 760 to 787 (RVYR…VVDS) and 912 to 943 (SGRC…ILER). Cysteine 1082 carries S-farnesyl cysteine lipidation.

Belongs to the phosphorylase b kinase regulatory chain family. As to quaternary structure, hexadecamer of 4 heterotetramers, each composed of alpha, beta, gamma, and delta subunits. Alpha (PHKA1 or PHKA2) and beta (PHKB) are regulatory subunits, gamma (PHKG1 or PHKG2) is the catalytic subunit, and delta is calmodulin. Although the final Cys may be farnesylated, the terminal tripeptide is probably not removed, and the C-terminus is not methylated.

It localises to the cell membrane. The protein operates within glycan biosynthesis; glycogen metabolism. With respect to regulation, by phosphorylation of various serine residues. Its function is as follows. Phosphorylase b kinase catalyzes the phosphorylation of serine in certain substrates, including troponin I. The beta chain acts as a regulatory unit and modulates the activity of the holoenzyme in response to phosphorylation. This chain is Phosphorylase b kinase regulatory subunit beta (Phkb), found in Mus musculus (Mouse).